The following is a 184-amino-acid chain: Probable RNA 2'-phosphotransferase (184 aa).

It belongs to the KptA/TPT1 family.

In terms of biological role, removes the 2'-phosphate from RNA via an intermediate in which the phosphate is ADP-ribosylated by NAD followed by a presumed transesterification to release the RNA and generate ADP-ribose 1''-2''-cyclic phosphate (APPR&gt;P). May function as an ADP-ribosylase. This Rhizobium leguminosarum bv. trifolii (strain WSM2304) protein is Probable RNA 2'-phosphotransferase.